We begin with the raw amino-acid sequence, 251 residues long: Proteasome subunit alpha type-4-like (251 aa).

Belongs to the peptidase T1A family. In terms of assembly, the 26S proteasome consists of a 20S proteasome core and two 19S regulatory subunits. The 20S proteasome core is composed of 28 subunits that are arranged in four stacked rings, resulting in a barrel-shaped structure. The two end rings are each formed by seven alpha subunits, and the two central rings are each formed by seven beta subunits. The catalytic chamber with the active sites is on the inside of the barrel. As to expression, testis, prominent after meiosis II. After meiosis, predominantly localized to the haploid spermatid nuclei of the 64-cell cysts, remaining during the elongation and condensation of the spermatid nuclei. In mature, motile sperm, expression is seen exclusively in the sperm head.

It localises to the nucleus. The proteasome is a multicatalytic proteinase complex which is characterized by its ability to cleave peptides with Arg, Phe, Tyr, Leu, and Glu adjacent to the leaving group at neutral or slightly basic pH. The proteasome has an ATP-dependent proteolytic activity. The polypeptide is Proteasome subunit alpha type-4-like (Prosalpha3T) (Drosophila melanogaster (Fruit fly)).